We begin with the raw amino-acid sequence, 401 residues long: L-rhamnonate dehydratase (401 aa).

Positions 29 and 55 each coordinate substrate. Residues D222, E248, and E276 each contribute to the Mg(2+) site. H325 serves as the catalytic Proton acceptor. A substrate-binding site is contributed by E345.

Belongs to the mandelate racemase/muconate lactonizing enzyme family. RhamD subfamily. In terms of assembly, homooctamer; tetramer of dimers. Mg(2+) is required as a cofactor.

It carries out the reaction L-rhamnonate = 2-dehydro-3-deoxy-L-rhamnonate + H2O. Its function is as follows. Catalyzes the dehydration of L-rhamnonate to 2-keto-3-deoxy-L-rhamnonate (KDR). Can also dehydrate L-lyxonate, L-mannonate and D-gulonate, although less efficiently, but not 2-keto-4-hydroxyheptane-1,7-dioate. In Escherichia coli (strain K12), this protein is L-rhamnonate dehydratase (rhmD).